Reading from the N-terminus, the 500-residue chain is L-arabinose isomerase (500 aa).

Residues Glu-306, Glu-333, His-350, and His-450 each contribute to the Mn(2+) site.

This sequence belongs to the arabinose isomerase family. Homohexamer. Requires Mn(2+) as cofactor.

It catalyses the reaction beta-L-arabinopyranose = L-ribulose. The protein operates within carbohydrate degradation; L-arabinose degradation via L-ribulose; D-xylulose 5-phosphate from L-arabinose (bacterial route): step 1/3. Functionally, catalyzes the conversion of L-arabinose to L-ribulose. The protein is L-arabinose isomerase of Salmonella choleraesuis (strain SC-B67).